The following is a 968-amino-acid chain: RNA polymerase-associated protein RapA (968 aa).

Residues 164–334 (DVGRRHAPRV…FARLRLLDPN (171 aa)) form the Helicase ATP-binding domain. Position 177 to 184 (177 to 184 (DEVGLGKT)) interacts with ATP. The short motif at 280–283 (DEAH) is the DEAH box element. The Helicase C-terminal domain occupies 490 to 662 (RVEWLMGYLT…YLASPDQTEG (173 aa)).

It belongs to the SNF2/RAD54 helicase family. RapA subfamily. In terms of assembly, interacts with the RNAP. Has a higher affinity for the core RNAP than for the holoenzyme. Its ATPase activity is stimulated by binding to RNAP.

In terms of biological role, transcription regulator that activates transcription by stimulating RNA polymerase (RNAP) recycling in case of stress conditions such as supercoiled DNA or high salt concentrations. Probably acts by releasing the RNAP, when it is trapped or immobilized on tightly supercoiled DNA. Does not activate transcription on linear DNA. Probably not involved in DNA repair. This Escherichia fergusonii (strain ATCC 35469 / DSM 13698 / CCUG 18766 / IAM 14443 / JCM 21226 / LMG 7866 / NBRC 102419 / NCTC 12128 / CDC 0568-73) protein is RNA polymerase-associated protein RapA.